The chain runs to 556 residues: MSMFCYQCSETLNGKACTVAGVCGKDPETSNLLDLLVWVLKGISFWATEARKLGVDDPEVNLFVAEGLFTTITNVNFDPESIGKKIEKAFALRERIMKATKEAYKEQYGKEFSKEVPEAATWYVPGDLSVWELKGAEVGALSTKDEDIRSLRELLTYGLKGIAAYTDHAYILQKFNDEILHFLQEGLAATLDDSLTVNDYVALVMKAGEFAVKAMQLLDEANTSRYGNPEITEVYTGTLPGPAILVSGHDLLDLEEILKQTEGKGINVYTHGEMLPAHAYPELKKYKHLVGNYGTSWYNQQKEFAQFNGAIVMTTNCIQKPLESYKDRIFTTGLVGWPGVKHIPNRTDGGQKDFTPVIEKALELGGLEEKPGKKIVIGFAHEQTAQVADKIIEAVKAGKIKRFVVMAGCDGRAKEREYYTEMAKRLPKETVILTAGCAKYRYNMLDLGDIDGIPRVIDAGQCNDSYSLVVTALRLKEAFGLDDINDLPISYDIAWYEQKAVAVLLALLYLGVKGIRLGPVLPAFLSPNVLKVLVENFDIKPISTVEQDLELILQGK.

[4Fe-4S] cluster-binding residues include cysteine 5, cysteine 8, cysteine 17, and cysteine 23. Histidine 249, glutamate 273, cysteine 317, cysteine 409, cysteine 437, cysteine 462, glutamate 497, and lysine 499 together coordinate hybrid [4Fe-2O-2S] cluster. At cysteine 409 the chain carries Cysteine persulfide.

It belongs to the HCP family. Requires [4Fe-4S] cluster as cofactor. It depends on hybrid [4Fe-2O-2S] cluster as a cofactor.

The protein localises to the cytoplasm. It carries out the reaction A + NH4(+) + H2O = hydroxylamine + AH2 + H(+). Catalyzes the reduction of hydroxylamine to form NH(3) and H(2)O. This chain is Hydroxylamine reductase, found in Kosmotoga olearia (strain ATCC BAA-1733 / DSM 21960 / TBF 19.5.1).